A 486-amino-acid polypeptide reads, in one-letter code: Cytochrome P450 monooxygenase 1 (486 aa).

A signal peptide spans 1–21; sequence MSHFLPTLILTSLTLVAYVLA. An N-linked (GlcNAc...) asparagine glycan is attached at Asn-346. Cys-430 is a binding site for heme. Asn-434 is a glycosylation site (N-linked (GlcNAc...) asparagine).

Belongs to the cytochrome P450 family. Heme is required as a cofactor.

The protein operates within mycotoxin biosynthesis. In terms of biological role, cytochrome P450 monooxygenase; part of the gene cluster that mediates the biosynthesis of aphidicolin, a specific inhibitor of eukaryotic DNA synthesis and DNA polymerase alpha. The geranylgeranyl pyrophosphate synthase GGS is required for supplying a sufficient amount of geranylgeranyl diphosphate (GGDP), the general precursor of diterpenes. The diterpene synthase ACS then catalyzes the conversion of geranylgeranyl diphosphate to aphidicolan-16-beta-ol via the intermediate syn-copalyldiphosphate (syn-CDP). In addition to aphidicolan-16-beta-ol, the enzyme also produces low levels of amphidicol-15-ene and amphidicol-16-ene. The cytochrome P450 monooxygenase P450-2 then catalyzes the two-step hydroxylation from aphidicolan-16-beta-ol to 3-deoxyaphidicolin via a 17,3-deoxyaphidicolin intermediate. Finally, the cytochrome P450 monooxygenase P450-1 converts 3-deoxyaphidicolin to aphidicolin. The chain is Cytochrome P450 monooxygenase 1 (PbP450-1) from Neocamarosporium betae (Beet black rot fungus).